The primary structure comprises 190 residues: Peptidyl-tRNA hydrolase (190 aa).

Tyr-17 contacts tRNA. Catalysis depends on His-22, which acts as the Proton acceptor. The tRNA site is built by Tyr-67 and Asn-69.

Belongs to the PTH family. Monomer.

Its subcellular location is the cytoplasm. The catalysed reaction is an N-acyl-L-alpha-aminoacyl-tRNA + H2O = an N-acyl-L-amino acid + a tRNA + H(+). Hydrolyzes ribosome-free peptidyl-tRNAs (with 1 or more amino acids incorporated), which drop off the ribosome during protein synthesis, or as a result of ribosome stalling. In terms of biological role, catalyzes the release of premature peptidyl moieties from peptidyl-tRNA molecules trapped in stalled 50S ribosomal subunits, and thus maintains levels of free tRNAs and 50S ribosomes. The protein is Peptidyl-tRNA hydrolase of Moorella thermoacetica (strain ATCC 39073 / JCM 9320).